Reading from the N-terminus, the 317-residue chain is Aspartate carbamoyltransferase catalytic subunit (317 aa).

Positions 66 and 67 each coordinate carbamoyl phosphate. Residue Lys-94 participates in L-aspartate binding. Residues Arg-116, His-144, and Gln-147 each coordinate carbamoyl phosphate. L-aspartate is bound by residues Arg-177 and Arg-231. Carbamoyl phosphate is bound by residues Gly-272 and Pro-273.

Belongs to the aspartate/ornithine carbamoyltransferase superfamily. ATCase family. In terms of assembly, heterododecamer (2C3:3R2) of six catalytic PyrB chains organized as two trimers (C3), and six regulatory PyrI chains organized as three dimers (R2).

The catalysed reaction is carbamoyl phosphate + L-aspartate = N-carbamoyl-L-aspartate + phosphate + H(+). It functions in the pathway pyrimidine metabolism; UMP biosynthesis via de novo pathway; (S)-dihydroorotate from bicarbonate: step 2/3. Functionally, catalyzes the condensation of carbamoyl phosphate and aspartate to form carbamoyl aspartate and inorganic phosphate, the committed step in the de novo pyrimidine nucleotide biosynthesis pathway. This is Aspartate carbamoyltransferase catalytic subunit from Nitrobacter hamburgensis (strain DSM 10229 / NCIMB 13809 / X14).